The primary structure comprises 1171 residues: Protein WWC2 (1171 aa).

WW domains are found at residues 9–42 (LPLPDGWEEARDYDGKVFYIDHNSRQTSWIDPRD) and 56–89 (NELPWGWESSYDPQIGVYFINHINQTTQIEDPRK). 3 coiled-coil regions span residues 120–193 (KEQR…YKEQ), 223–257 (ELKSIRKAISTGEKEKQDLMQSLVKLKERFHLEEA), and 301–420 (LAEK…KSAT). Disordered regions lie at residues 521-552 (SPTAQQDTQDAKPPKSVTSLSSLSSLSSLSPP) and 603-637 (QALAERKSTGEGLRHQSSASQEGRTDIEFPRKNPD). Low complexity predominate over residues 534–551 (PKSVTSLSSLSSLSSLSP). Composition is skewed to basic and acidic residues over residues 606-616 (AERKSTGEGLR) and 625-637 (GRTDIEFPRKNPD). Residues 684-806 (GAAQAQLILR…FSNDVHTQWY (123 aa)) enclose the C2 domain. 2 coiled-coil regions span residues 836–870 (LDLDAVSALLERTSAELEAVEQELAQEDDDQEQLC) and 1047–1123 (DLEL…NAEK).

This sequence belongs to the WWC family.

It is found in the cytoplasm. It localises to the cytosol. In terms of biological role, negative regulator of the Hippo signaling pathway, also known as the Salvador-Warts-Hippo (SWH) pathway. This chain is Protein WWC2 (wwc2), found in Xenopus tropicalis (Western clawed frog).